Here is a 461-residue protein sequence, read N- to C-terminus: Glutamate--tRNA ligase (461 aa).

The short motif at 8-18 (PSPTGYLHIGG) is the 'HIGH' region element. The short motif at 240–244 (KMSKR) is the 'KMSKS' region element. Residue lysine 243 coordinates ATP.

Belongs to the class-I aminoacyl-tRNA synthetase family. Glutamate--tRNA ligase type 1 subfamily. As to quaternary structure, monomer.

It is found in the cytoplasm. The enzyme catalyses tRNA(Glu) + L-glutamate + ATP = L-glutamyl-tRNA(Glu) + AMP + diphosphate. Its function is as follows. Catalyzes the attachment of glutamate to tRNA(Glu) in a two-step reaction: glutamate is first activated by ATP to form Glu-AMP and then transferred to the acceptor end of tRNA(Glu). This is Glutamate--tRNA ligase from Chromobacterium violaceum (strain ATCC 12472 / DSM 30191 / JCM 1249 / CCUG 213 / NBRC 12614 / NCIMB 9131 / NCTC 9757 / MK).